The chain runs to 509 residues: Steroid 17-alpha-hydroxylase/17,20 lyase (509 aa).

Asparagine 202 lines the substrate pocket. Cysteine 442 is a binding site for heme.

It belongs to the cytochrome P450 family. Heme serves as cofactor.

The protein resides in the endoplasmic reticulum membrane. It localises to the microsome membrane. The enzyme catalyses a C21-steroid + reduced [NADPH--hemoprotein reductase] + O2 = a 17alpha-hydroxy-C21-steroid + oxidized [NADPH--hemoprotein reductase] + H2O + H(+). It carries out the reaction progesterone + reduced [NADPH--hemoprotein reductase] + O2 = 17alpha-hydroxyprogesterone + oxidized [NADPH--hemoprotein reductase] + H2O + H(+). It catalyses the reaction pregnenolone + reduced [NADPH--hemoprotein reductase] + O2 = 17alpha-hydroxypregnenolone + oxidized [NADPH--hemoprotein reductase] + H2O + H(+). The catalysed reaction is 17alpha-hydroxyprogesterone + reduced [NADPH--hemoprotein reductase] + O2 = androst-4-ene-3,17-dione + acetate + oxidized [NADPH--hemoprotein reductase] + H2O + 2 H(+). The enzyme catalyses 17alpha-hydroxyprogesterone + reduced [NADPH--hemoprotein reductase] + O2 = 16alpha,17alpha-dihydroxyprogesterone + oxidized [NADPH--hemoprotein reductase] + H2O + H(+). It carries out the reaction 16alpha,17alpha-dihydroxyprogesterone + reduced [NADPH--hemoprotein reductase] + O2 = 6beta,16alpha,17alpha-trihydroxyprogesterone + oxidized [NADPH--hemoprotein reductase] + H2O + H(+). It catalyses the reaction 17alpha-hydroxypregnenolone + reduced [NADPH--hemoprotein reductase] + O2 = 3beta-hydroxyandrost-5-en-17-one + acetate + oxidized [NADPH--hemoprotein reductase] + H2O + 2 H(+). The catalysed reaction is 16alpha,17alpha-dihydroxypregnenolone + reduced [NADPH--hemoprotein reductase] + O2 = 3beta,16alpha-dihydroxy-androst-5-en-17-one + acetate + oxidized [NADPH--hemoprotein reductase] + H2O + 2 H(+). The enzyme catalyses 3beta-hydroxyandrost-5-en-17-one + reduced [NADPH--hemoprotein reductase] + O2 = 3beta,16alpha-dihydroxy-androst-5-en-17-one + oxidized [NADPH--hemoprotein reductase] + H2O + H(+). It carries out the reaction androst-4-ene-3,17-dione + reduced [NADPH--hemoprotein reductase] + O2 = 16alpha-hydroxyandrost-4-ene-3,17-dione + oxidized [NADPH--hemoprotein reductase] + H2O + H(+). It participates in steroid hormone biosynthesis. It functions in the pathway steroid biosynthesis; glucocorticoid biosynthesis. With respect to regulation, regulated predominantly by intracellular cAMP levels. The 17,20-lyase activity is stimulated by cytochrome b5, which acts as an allosteric effector increasing the Vmax of the lyase activity. Its function is as follows. A cytochrome P450 monooxygenase involved in corticoid and androgen biosynthesis. Catalyzes 17-alpha hydroxylation of C21 steroids, which is common for both pathways. A second oxidative step, required only for androgen synthesis, involves an acyl-carbon cleavage. The 17-alpha hydroxy intermediates, as part of adrenal glucocorticoids biosynthesis pathway, are precursors of cortisol. Hydroxylates steroid hormones, pregnenolone and progesterone to form 17-alpha hydroxy metabolites, followed by the cleavage of the C17-C20 bond to form C19 steroids, dehydroepiandrosterone (DHEA) and androstenedione. Has 16-alpha hydroxylase activity. Catalyzes 16-alpha hydroxylation of 17-alpha hydroxy pregnenolone, followed by the cleavage of the C17-C20 bond to form 16-alpha-hydroxy DHEA. Also 16-alpha hydroxylates androgens, relevant for estriol synthesis. Mechanistically, uses molecular oxygen inserting one oxygen atom into a substrate, and reducing the second into a water molecule, with two electrons provided by NADPH via cytochrome P450 reductase (CPR; NADPH-ferrihemoprotein reductase). The sequence is that of Steroid 17-alpha-hydroxylase/17,20 lyase (CYP17A1) from Ovis aries (Sheep).